The sequence spans 63 residues: Cecropin-A1 (63 aa).

Positions 1–23 (MKFYNIFVFVALILAITIGQSEA) are cleaved as a signal peptide. Arginine 62 bears the Arginine amide mark.

It belongs to the cecropin family.

It localises to the secreted. Its function is as follows. Cecropins have lytic and antibacterial activity against several Gram-positive and Gram-negative bacteria. The polypeptide is Cecropin-A1 (CecA1) (Drosophila mauritiana (Fruit fly)).